The following is a 328-amino-acid chain: Phenylalanine--tRNA ligase alpha subunit (328 aa).

Residue glutamate 253 participates in Mg(2+) binding.

The protein belongs to the class-II aminoacyl-tRNA synthetase family. Phe-tRNA synthetase alpha subunit type 1 subfamily. As to quaternary structure, tetramer of two alpha and two beta subunits. Mg(2+) serves as cofactor.

It localises to the cytoplasm. The catalysed reaction is tRNA(Phe) + L-phenylalanine + ATP = L-phenylalanyl-tRNA(Phe) + AMP + diphosphate + H(+). The sequence is that of Phenylalanine--tRNA ligase alpha subunit from Actinobacillus pleuropneumoniae serotype 5b (strain L20).